We begin with the raw amino-acid sequence, 677 residues long: Platelet glycoprotein Ib alpha chain (677 aa).

The N-terminal stretch at 1–16 (MHLLLWLLLLARLCRP) is a signal peptide. The 31-residue stretch at 17-47 (EFICEVSKVTSQVEVNCDNKGLKALPPGLPG) folds into the LRRNT domain. At 17 to 564 (EFICEVSKVT…NPDLCCLLPL (548 aa)) the chain is on the extracellular side. Cysteines 20 and 33 form a disulfide. LRR repeat units follow at residues 72–93 (RLAQLHLRQSQLTQLQVDGMLP), 94–115 (RLETLDVSHNRLKSLPSLGRAL), 117–138 (ALTTLDASFNELVALSPGTLDG), 141–162 (HLHELYLRGNKLKTLPPRLLAP), 165–186 (QLRKLNLADNRLTELPPGFLEG), and 189–210 (ELDTLYLQGNWLRTVPKGFFGD). The LRRCT domain maps to 221–282 (NPWSCDCEIL…HTYQGKDCPS (62 aa)). 2 cysteine pairs are disulfide-bonded: Cys225–Cys264 and Cys227–Cys280. 2 positions are modified to sulfotyrosine: Tyr291 and Tyr294. 11 O-linked (GalNAc...) threonine glycosylation sites follow: Thr309, Thr319, Thr323, Thr324, Thr346, Thr354, Thr368, Thr372, Thr376, Thr377, and Thr399. The segment at 359-499 (TLGPIMPTTT…EPTTTPTSPT (141 aa)) is disordered. Composition is skewed to low complexity over residues 362–385 (PIMPTTTPEPTTPPTTLEPTTTPT), 393–403 (PTTLEPTTTPI), 411–421 (PTTLEPTTTPI), and 427–470 (TPST…TPTI). Residues 471 to 485 (PELPTPPTTPEPTMP) show a composition bias toward pro residues. The segment covering 486-499 (PTTLEPTTTPTSPT) has biased composition (low complexity). The O-linked (GalNAc...) threonine glycan is linked to Thr487. An O-linked (GalNAc...) serine glycan is attached at Ser497. O-linked (GalNAc...) threonine glycosylation is present at Thr500. O-linked (GalNAc...) serine glycosylation occurs at Ser523. A helical membrane pass occupies residues 565 to 585 (GFYILGLLWLLFASVVLILLL). Residues 586-677 (TWAQHVKPQA…VGVRYSSHSL (92 aa)) are Cytoplasmic-facing. Phosphoserine occurs at positions 654 and 657.

In terms of assembly, two GP-Ib beta are disulfide-linked to one GP-Ib alpha. GP-IX is complexed with the GP-Ib heterodimer via a non covalent linkage. Interacts with FLNB. Interacts with FLNA (via filamin repeats 4, 9, 12, 17, 19, 21, and 23). Post-translationally, O-glycosylated. Glycocalicin is the product of a proteolytic cleavage/shedding, catalyzed by ADAM17, which releases most of the extracellular domain. Binding sites for vWF and thrombin are in this part of the protein.

The protein localises to the membrane. GP-Ib, a surface membrane protein of platelets, participates in the formation of platelet plugs by binding to the A1 domain of vWF, which is already bound to the subendothelium. The polypeptide is Platelet glycoprotein Ib alpha chain (GP1BA) (Canis lupus familiaris (Dog)).